A 500-amino-acid chain; its full sequence is L-arabinose isomerase (500 aa).

Residues glutamate 306, glutamate 333, histidine 350, and histidine 450 each contribute to the Mn(2+) site.

Belongs to the arabinose isomerase family. In terms of assembly, homohexamer. The cofactor is Mn(2+).

The enzyme catalyses beta-L-arabinopyranose = L-ribulose. The protein operates within carbohydrate degradation; L-arabinose degradation via L-ribulose; D-xylulose 5-phosphate from L-arabinose (bacterial route): step 1/3. In terms of biological role, catalyzes the conversion of L-arabinose to L-ribulose. The sequence is that of L-arabinose isomerase from Salmonella paratyphi A (strain ATCC 9150 / SARB42).